The primary structure comprises 352 residues: PhoH-like protein (352 aa).

The disordered stretch occupies residues 1-21; sequence MTSRETRAADAAGARQADAQV. Positions 9-20 are enriched in low complexity; that stretch reads ADAAGARQADAQ. Position 150 to 157 (150 to 157) interacts with ATP; sequence GPAGTGKT.

It belongs to the PhoH family.

The protein localises to the cytoplasm. This chain is PhoH-like protein, found in Mycobacterium bovis (strain ATCC BAA-935 / AF2122/97).